The sequence spans 394 residues: Mitogen-activated protein kinase homolog D5 (394 aa).

One can recognise a Protein kinase domain in the interval 62–347; the sequence is RPPIMPIGKG…VENALAHPYL (286 aa). ATP-binding positions include 68–76 and Lys-91; that span reads IGKGAYGIV. Catalysis depends on Asp-188, which acts as the Proton acceptor. Thr-220 is modified (phosphothreonine). The TXY motif lies at 220–222; the sequence is TEY. The residue at position 222 (Tyr-222) is a Phosphotyrosine.

The protein belongs to the protein kinase superfamily. CMGC Ser/Thr protein kinase family. MAP kinase subfamily. Mg(2+) is required as a cofactor. Post-translationally, dually phosphorylated on Thr-220 and Tyr-222, which activates the enzyme. In terms of tissue distribution, leaves, roots, root apices, and dormant and growing axillary buds.

It catalyses the reaction L-seryl-[protein] + ATP = O-phospho-L-seryl-[protein] + ADP + H(+). The catalysed reaction is L-threonyl-[protein] + ATP = O-phospho-L-threonyl-[protein] + ADP + H(+). Activated by tyrosine and threonine phosphorylation. In Pisum sativum (Garden pea), this protein is Mitogen-activated protein kinase homolog D5.